We begin with the raw amino-acid sequence, 1361 residues long: Protein transport protein SEC16B homolog (1361 aa).

S46 carries the post-translational modification Phosphoserine. Disordered stretches follow at residues 82–109 (NEGASGSVGEDEPSSIAPEAVQFPHSDA), 487–513 (VDDAPQSFQSSQLFSPSAGRSSDGRPP), 984–1013 (PVGGMPPPAPHSTKGNLQGNEYQHQQQEAT), 1025–1062 (SSLMPPASVEPTHESGGSGRRMAVHTRSVSEPDFGRTP), 1163–1204 (ENKS…ARGR), 1216–1235 (NPPGRGNSHTMIPSPSVQTA), and 1306–1361 (SVNG…EVEL). The span at 491–503 (PQSFQSSQLFSPS) shows a compositional bias: low complexity. Polar residues predominate over residues 996–1013 (TKGNLQGNEYQHQQQEAT). 3 stretches are compositionally biased toward polar residues: residues 1169–1200 (IPSNGNWSSGGPTPSENSSGIPPISHGSNQFS), 1222–1234 (NSHTMIPSPSVQT), and 1308–1325 (NGDNHQPPTSRRTASWSG). Over residues 1326–1354 (NFNTSFTPPTSPSTFKPVLLNSSSSSLGE) the composition is skewed to low complexity.

This sequence belongs to the SEC16 family.

The protein resides in the golgi apparatus. The protein localises to the endoplasmic reticulum. Its function is as follows. Required for protein transport from the endoplasmic reticulum to the Golgi apparatus. The polypeptide is Protein transport protein SEC16B homolog (Arabidopsis thaliana (Mouse-ear cress)).